Consider the following 296-residue polypeptide: Chondrolectin (296 aa).

Residues 1-20 (MRATLRILCALTFLVSCSRG) form the signal peptide. At 21-238 (ARVVSGQTVC…RLIIAGPSSM (218 aa)) the chain is on the extracellular side. In terms of domain architecture, C-type lectin spans 38 to 187 (CYKIAYFKDV…CNMKHNFICK (150 aa)). A compositionally biased stretch (basic and acidic residues) spans 197–221 (VQSDRPGGHDVDLSTEDKEDRRTPP). Positions 197-229 (VQSDRPGGHDVDLSTEDKEDRRTPPTDEDESPR) are disordered. Residues 239 to 266 (LLIYVIIPTIPLLLLILVASGTCCFQML) traverse the membrane as a helical segment. At 267–296 (SKSKPRTKTSVNQSTLWISKTPKIDSGMEV) the chain is on the cytoplasmic side.

Expressed in developing motor neurons.

Its subcellular location is the membrane. Its function is as follows. Plays a role in the development of the nervous system such as in neurite outgrowth and elongation. Involved in motor axon growth and guidance. Required for correct interactions of motor axons with the horizontal myoseptum. In Danio rerio (Zebrafish), this protein is Chondrolectin (chodl).